Reading from the N-terminus, the 366-residue chain is MSNAQEAVKTRHKETSLIFPVLALVVLFLWGSSQTLPVVIAINLLALIGILSSAFSVVRHADVLAHRLGEPYGSLILSLSVVILEVSLISALMATGDAAPTLMRDTLYSIIMIVTGGLVGFSLLLGGRKFATQYMNLFGIKQYLIALFPLAIIVLVFPMALPAANFSTGQALLVALISAAMYGVFLLIQTKTHQSLFVYEHEDDSDDDDPHHGKPSAHSSLWHAIWLIIHLIAVIAVTKMNASSLETLLDSMNAPVAFTGFLVALLILSPEGLGALKAVLNNQVQRAMNLFFGSVLATISLTVPVVTLIAFMTGNELQFALGAPEMVVMVASLVLCHISFSTGRTNVLNGAAHLALFAAYLMTIFA.

The Cytoplasmic segment spans residues 1–16 (MSNAQEAVKTRHKETS). Helical transmembrane passes span 17–37 (LIFP…QTLP) and 38–58 (VVIA…FSVV). Topologically, residues 59 to 74 (RHADVLAHRLGEPYGS) are cytoplasmic. Residues 75 to 95 (LILSLSVVILEVSLISALMAT) form a helical membrane-spanning segment. At 96 to 106 (GDAAPTLMRDT) the chain is on the periplasmic side. Residues 107–127 (LYSIIMIVTGGLVGFSLLLGG) traverse the membrane as a helical segment. At 128–143 (RKFATQYMNLFGIKQY) the chain is on the cytoplasmic side. Residues 144–164 (LIALFPLAIIVLVFPMALPAA) traverse the membrane as a helical segment. The Periplasmic portion of the chain corresponds to 165-167 (NFS). Residues 168–188 (TGQALLVALISAAMYGVFLLI) form a helical membrane-spanning segment. Topologically, residues 189–216 (QTKTHQSLFVYEHEDDSDDDDPHHGKPS) are cytoplasmic. Residues 217 to 237 (AHSSLWHAIWLIIHLIAVIAV) form a helical membrane-spanning segment. Residues 238-255 (TKMNASSLETLLDSMNAP) are Periplasmic-facing. Residues 256–276 (VAFTGFLVALLILSPEGLGAL) form a helical membrane-spanning segment. At 277–290 (KAVLNNQVQRAMNL) the chain is on the cytoplasmic side. The helical transmembrane segment at 291–311 (FFGSVLATISLTVPVVTLIAF) threads the bilayer. At 312–318 (MTGNELQ) the chain is on the periplasmic side. Residues 319 to 339 (FALGAPEMVVMVASLVLCHIS) traverse the membrane as a helical segment. The Cytoplasmic portion of the chain corresponds to 340 to 345 (FSTGRT). Residues 346 to 366 (NVLNGAAHLALFAAYLMTIFA) form a helical membrane-spanning segment.

It belongs to the Ca(2+):cation antiporter (CaCA) (TC 2.A.19) family.

The protein localises to the cell inner membrane. It carries out the reaction Na(+)(in) + H(+)(out) = Na(+)(out) + H(+)(in). The enzyme catalyses K(+)(in) + H(+)(out) = K(+)(out) + H(+)(in). It catalyses the reaction Ca(2+)(in) + H(+)(out) = Ca(2+)(out) + H(+)(in). Pronounced pH dependence with sodium as substrate. Ca(2+)/H(+) and Na(+)/H(+) antiporter activities are both inhibited by magnesium. Ca(2+)/H(+) activity is inhibited by the proton ionophore carbonyl cyanide m-chlorophenylhydrazone (CCCP). Its function is as follows. Sodium exporter that functions mainly at alkaline pH. Can also function as a potassium/proton and calcium/proton antiporter at alkaline pH. Does not play a major role in calcium export. The K(+)/H(+) antiporter activity may enable E.coli to adapt to K(+) salinity stress and to maintain K(+) homeostasis. This Escherichia coli (strain K12) protein is Sodium-potassium/proton antiporter ChaA.